Reading from the N-terminus, the 473-residue chain is ATP synthase subunit beta (473 aa).

An ATP-binding site is contributed by 153–160 (GGAGVGKT).

This sequence belongs to the ATPase alpha/beta chains family. As to quaternary structure, F-type ATPases have 2 components, CF(1) - the catalytic core - and CF(0) - the membrane proton channel. CF(1) has five subunits: alpha(3), beta(3), gamma(1), delta(1), epsilon(1). CF(0) has three main subunits: a(1), b(2) and c(9-12). The alpha and beta chains form an alternating ring which encloses part of the gamma chain. CF(1) is attached to CF(0) by a central stalk formed by the gamma and epsilon chains, while a peripheral stalk is formed by the delta and b chains.

It is found in the cell membrane. It carries out the reaction ATP + H2O + 4 H(+)(in) = ADP + phosphate + 5 H(+)(out). Functionally, produces ATP from ADP in the presence of a proton gradient across the membrane. The catalytic sites are hosted primarily by the beta subunits. In Rickettsia africae (strain ESF-5), this protein is ATP synthase subunit beta.